Consider the following 43-residue polypeptide: Omega-ctenitoxin-Pr1a (43 aa).

4 cysteine pairs are disulfide-bonded: cysteine 2–cysteine 17, cysteine 9–cysteine 22, cysteine 16–cysteine 33, and cysteine 24–cysteine 31. At glycine 43 the chain carries Glycine amide.

As to expression, expressed by the venom gland.

It is found in the secreted. Inhibits high-voltage activated calcium channels. Shifts the voltage-dependence for activation towards hyperpolarized membrane potentials for L- (Cav1), P/Q- (Cav2.1/CACNA1A) and R-type (Cav2.3/CACNA1E) calcium currents. Causes immediate agitation and clockwise gyration, followed by the gradual development of general flaccid paralysis when injected intracerebroventricular into mice at dose levels of 5 ug per mouse. This is Omega-ctenitoxin-Pr1a from Phoneutria reidyi (Brazilian Amazonian armed spider).